A 551-amino-acid chain; its full sequence is BAG family molecular chaperone regulator 8, chloroplastic (551 aa).

Over residues 1–19 (MASHHHHNHNHVCSRHQNH) the composition is skewed to basic residues. The interval 1-46 (MASHHHHNHNHVCSRHQNHHNNTPQFATSPNCCNKSNHPSPPPAED) is disordered. Residues 1–52 (MASHHHHNHNHVCSRHQNHHNNTPQFATSPNCCNKSNHPSPPPAEDNLLHLV) constitute a chloroplast transit peptide. Positions 20-38 (HNNTPQFATSPNCCNKSNH) are enriched in polar residues. The 30-residue stretch at 131–160 (RDSAARVIQTHFRSYLVHRSISFRQLKELA) folds into the IQ domain. Residues 147 to 228 (VHRSISFRQL…RFVQYVDDCV (82 aa)) form the BAG domain. The tract at residues 246 to 281 (GKKPQGFGTSSEDEDNNADMSDDSEEVPVSSIDKRK) is disordered. Acidic residues predominate over residues 256 to 271 (SEDEDNNADMSDDSEE). A Phosphoserine modification is found at Ser-332. Disordered stretches follow at residues 414-433 (DEGKRRSSKTGSRVLVKGSG) and 450-551 (NVYK…KMEP). The segment covering 479 to 499 (GEEKGNVNEVEEIKYVPKENE) has biased composition (basic and acidic residues). A compositionally biased stretch (acidic residues) spans 500 to 513 (SFEEEEEKETDSEN). Residues 522 to 534 (EGDKRVTKKEVQH) are compositionally biased toward basic and acidic residues.

As to quaternary structure, binds to the ATPase domain of HSP70/HSC70 chaperones.

It localises to the plastid. The protein localises to the chloroplast. In terms of biological role, co-chaperone that regulates diverse cellular pathways, such as programmed cell death and stress responses. The polypeptide is BAG family molecular chaperone regulator 8, chloroplastic (BAG1) (Arabidopsis thaliana (Mouse-ear cress)).